The following is a 169-amino-acid chain: Protein kinase-interacting protein PIKP1 (169 aa).

As to quaternary structure, interacts with protein kinase PK1.

In terms of biological role, plays a role in the stimulation of the viral kinase PK1 function in very late transcription and in expression of genes required for budded virus production. The polypeptide is Protein kinase-interacting protein PIKP1 (AC24) (Lepidoptera (butterflies and moths)).